The sequence spans 161 residues: Probable chemoreceptor glutamine deamidase CheD (161 aa).

This sequence belongs to the CheD family.

It carries out the reaction L-glutaminyl-[protein] + H2O = L-glutamyl-[protein] + NH4(+). Functionally, probably deamidates glutamine residues to glutamate on methyl-accepting chemotaxis receptors (MCPs), playing an important role in chemotaxis. This is Probable chemoreceptor glutamine deamidase CheD from Lachnoclostridium phytofermentans (strain ATCC 700394 / DSM 18823 / ISDg) (Clostridium phytofermentans).